Reading from the N-terminus, the 430-residue chain is Putative cytochrome P450 139 (430 aa).

Residue cysteine 372 coordinates heme.

It belongs to the cytochrome P450 family. It depends on heme as a cofactor.

The chain is Putative cytochrome P450 139 (cyp139) from Mycobacterium bovis (strain ATCC BAA-935 / AF2122/97).